The primary structure comprises 167 residues: Mediator of RNA polymerase II transcription subunit 10 (167 aa).

The segment covering 141–158 has biased composition (gly residues); the sequence is TGGRTVGGEGEGAGQGEG. The interval 141 to 167 is disordered; sequence TGGRTVGGEGEGAGQGEGGEGRGEGGN.

It belongs to the Mediator complex subunit 10 family. Component of the Mediator complex.

The protein localises to the nucleus. In terms of biological role, component of the Mediator complex, a coactivator involved in the regulated transcription of nearly all RNA polymerase II-dependent genes. Mediator functions as a bridge to convey information from gene-specific regulatory proteins to the basal RNA polymerase II transcription machinery. Mediator is recruited to promoters by direct interactions with regulatory proteins and serves as a scaffold for the assembly of a functional preinitiation complex with RNA polymerase II and the general transcription factors. This is Mediator of RNA polymerase II transcription subunit 10 (NUT2) from Chaetomium globosum (strain ATCC 6205 / CBS 148.51 / DSM 1962 / NBRC 6347 / NRRL 1970) (Soil fungus).